A 261-amino-acid chain; its full sequence is Cytochrome c oxidase subunit 3 (261 aa).

Over 1–15 (MTHQTHAYHMVNPSP) the chain is Mitochondrial matrix. The chain crosses the membrane as a helical span at residues 16-34 (WPLTGALSALLMTSGLIMW). The Mitochondrial intermembrane portion of the chain corresponds to 35–40 (FHFNST). Residues 41 to 66 (ILLMLGLTTNMLTMYQWWRDIIREST) form a helical membrane-spanning segment. The Mitochondrial matrix portion of the chain corresponds to 67–72 (FQGHHT). A helical transmembrane segment spans residues 73-105 (PTVQKGLRYGMILFIISEVLFFTGFFWAFYHSS). The Mitochondrial intermembrane portion of the chain corresponds to 106-128 (LAPTPELGGCWPPTGIHPLNPLE). The chain crosses the membrane as a helical span at residues 129 to 152 (VPLLNTSVLLASGVSITWAHHSLM). Residues 153 to 155 (EGN) lie on the Mitochondrial matrix side of the membrane. Residues 156–183 (RNHMLQALFITIALGVYFTLLQASEYYE) form a helical membrane-spanning segment. At 184–190 (APFTISD) the chain is on the mitochondrial intermembrane side. Residues 191–223 (GVYGSTFFVATGFHGLHVIIGSTFLIVCFFRQL) traverse the membrane as a helical segment. The Mitochondrial matrix portion of the chain corresponds to 224 to 232 (KFHFTSSHH). Residues 233–256 (FGFEAAAWYWHFVDVVWLFLYVSI) form a helical membrane-spanning segment. Topologically, residues 257–261 (YWWGS) are mitochondrial intermembrane.

The protein belongs to the cytochrome c oxidase subunit 3 family. Component of the cytochrome c oxidase (complex IV, CIV), a multisubunit enzyme composed of 14 subunits. The complex is composed of a catalytic core of 3 subunits MT-CO1, MT-CO2 and MT-CO3, encoded in the mitochondrial DNA, and 11 supernumerary subunits COX4I, COX5A, COX5B, COX6A, COX6B, COX6C, COX7A, COX7B, COX7C, COX8 and NDUFA4, which are encoded in the nuclear genome. The complex exists as a monomer or a dimer and forms supercomplexes (SCs) in the inner mitochondrial membrane with NADH-ubiquinone oxidoreductase (complex I, CI) and ubiquinol-cytochrome c oxidoreductase (cytochrome b-c1 complex, complex III, CIII), resulting in different assemblies (supercomplex SCI(1)III(2)IV(1) and megacomplex MCI(2)III(2)IV(2)).

It is found in the mitochondrion inner membrane. It catalyses the reaction 4 Fe(II)-[cytochrome c] + O2 + 8 H(+)(in) = 4 Fe(III)-[cytochrome c] + 2 H2O + 4 H(+)(out). In terms of biological role, component of the cytochrome c oxidase, the last enzyme in the mitochondrial electron transport chain which drives oxidative phosphorylation. The respiratory chain contains 3 multisubunit complexes succinate dehydrogenase (complex II, CII), ubiquinol-cytochrome c oxidoreductase (cytochrome b-c1 complex, complex III, CIII) and cytochrome c oxidase (complex IV, CIV), that cooperate to transfer electrons derived from NADH and succinate to molecular oxygen, creating an electrochemical gradient over the inner membrane that drives transmembrane transport and the ATP synthase. Cytochrome c oxidase is the component of the respiratory chain that catalyzes the reduction of oxygen to water. Electrons originating from reduced cytochrome c in the intermembrane space (IMS) are transferred via the dinuclear copper A center (CU(A)) of subunit 2 and heme A of subunit 1 to the active site in subunit 1, a binuclear center (BNC) formed by heme A3 and copper B (CU(B)). The BNC reduces molecular oxygen to 2 water molecules using 4 electrons from cytochrome c in the IMS and 4 protons from the mitochondrial matrix. This is Cytochrome c oxidase subunit 3 (MT-CO3) from Aepyceros melampus (Impala).